Consider the following 367-residue polypeptide: D-alanine--D-alanine ligase (367 aa).

Residues 145 to 351 (KRLLRDAGLP…QPALMDELVA (207 aa)) form the ATP-grasp domain. 174–229 (RAVGSSELFVKPANLGSSVGISKTRDAAEFEAACQLALRFDRKILIERCIAPVREI) lines the ATP pocket. 3 residues coordinate Mg(2+): Asp-306, Glu-318, and Asn-320.

This sequence belongs to the D-alanine--D-alanine ligase family. Mg(2+) is required as a cofactor. It depends on Mn(2+) as a cofactor.

The protein localises to the cytoplasm. It carries out the reaction 2 D-alanine + ATP = D-alanyl-D-alanine + ADP + phosphate + H(+). It participates in cell wall biogenesis; peptidoglycan biosynthesis. Cell wall formation. The chain is D-alanine--D-alanine ligase from Bradyrhizobium sp. (strain ORS 278).